Reading from the N-terminus, the 145-residue chain is Deoxyuridine 5'-triphosphate nucleotidohydrolase (145 aa).

Substrate is bound by residues 63-65, Q76, and 80-82; these read RSG and TVD.

The protein belongs to the dUTPase family. Mg(2+) is required as a cofactor.

The enzyme catalyses dUTP + H2O = dUMP + diphosphate + H(+). It functions in the pathway pyrimidine metabolism; dUMP biosynthesis; dUMP from dCTP (dUTP route): step 2/2. In terms of biological role, this enzyme is involved in nucleotide metabolism: it produces dUMP, the immediate precursor of thymidine nucleotides and it decreases the intracellular concentration of dUTP so that uracil cannot be incorporated into DNA. This Chlamydia trachomatis serovar L2 (strain ATCC VR-902B / DSM 19102 / 434/Bu) protein is Deoxyuridine 5'-triphosphate nucleotidohydrolase.